The primary structure comprises 137 residues: Ribosome-binding factor A (137 aa).

Belongs to the RbfA family. Monomer. Binds 30S ribosomal subunits, but not 50S ribosomal subunits or 70S ribosomes.

The protein localises to the cytoplasm. Functionally, one of several proteins that assist in the late maturation steps of the functional core of the 30S ribosomal subunit. Associates with free 30S ribosomal subunits (but not with 30S subunits that are part of 70S ribosomes or polysomes). Required for efficient processing of 16S rRNA. May interact with the 5'-terminal helix region of 16S rRNA. This is Ribosome-binding factor A from Shewanella amazonensis (strain ATCC BAA-1098 / SB2B).